An 817-amino-acid chain; its full sequence is Myosin-A (817 aa).

S19 carries the phosphoserine modification. Residues M97–R771 form the Myosin motor domain. An ATP-binding site is contributed by G191–T198. Residues P661–E671 form an actin-binding region. A tail region spans residues K773 to A817.

Belongs to the TRAFAC class myosin-kinesin ATPase superfamily. Myosin family. Interacts with ACT1.

The protein resides in the cell membrane. Its function is as follows. Myosins are actin-based motor molecules with ATPase activity. Unconventional myosins serve in intracellular movements. Their highly divergent tails are presumed to bind to membranous compartments, which would be moved relative to actin filaments. The protein is Myosin-A of Plasmodium yoelii yoelii.